The following is a 429-amino-acid chain: MDLLIKGATIITLDGENEVLKGDILIENGKISEISQSIELSKEKMFATKVINAENLIALPGFINAHTHCGQTILRSYADDLPLYEWLFEKIFPAEEKLTKEIVYYSSLLGIAEMLKCGTTMFFDMYFHEDMTAKAALETGIKAVLSRGLQTDERQQQRLDETKELIYNYSSDKIKVFFGPHSVYTCSYELLEKVAELSEEFNTGIMIHLSESEDEVNQCYEKYDMSPVKLCQKAGLFTRPCIAAHCVYVDDEDIEILAENGVTAVYNPTSNLKLGNGFAPVFNLIKSGVNVAIGTDSAASNNNLNILEEIHIAALLEKGMYRLPEILKAQEVLKMATVNAAMAADIHNTGRLKKGFSADIVLIKANDLNMLPCYNTISNIVYSSNPSNVYATIVDGEILYMDGRLLTIDEEALIKEIKSIEKILEESIE.

Residues histidine 66 and histidine 68 each coordinate Zn(2+). Substrate-binding residues include glutamate 95, arginine 147, arginine 158, and histidine 181. Histidine 208 provides a ligand contact to Zn(2+). Positions 211 and 296 each coordinate substrate. Residue aspartate 296 participates in Zn(2+) binding.

Belongs to the metallo-dependent hydrolases superfamily. MTA/SAH deaminase family. The cofactor is Zn(2+).

It carries out the reaction S-adenosyl-L-homocysteine + H2O + H(+) = S-inosyl-L-homocysteine + NH4(+). The enzyme catalyses S-methyl-5'-thioadenosine + H2O + H(+) = S-methyl-5'-thioinosine + NH4(+). In terms of biological role, catalyzes the deamination of 5-methylthioadenosine and S-adenosyl-L-homocysteine into 5-methylthioinosine and S-inosyl-L-homocysteine, respectively. Is also able to deaminate adenosine. The polypeptide is 5-methylthioadenosine/S-adenosylhomocysteine deaminase (Caldicellulosiruptor saccharolyticus (strain ATCC 43494 / DSM 8903 / Tp8T 6331)).